The sequence spans 310 residues: p-hydroxybenzoic acid efflux pump subunit AaeA (310 aa).

A helical transmembrane segment spans residues 12-32 (AITVVLVILAFIAIFNAWVYY).

Belongs to the membrane fusion protein (MFP) (TC 8.A.1) family.

The protein localises to the cell inner membrane. In terms of biological role, forms an efflux pump with AaeB. The sequence is that of p-hydroxybenzoic acid efflux pump subunit AaeA from Escherichia coli O17:K52:H18 (strain UMN026 / ExPEC).